Consider the following 208-residue polypeptide: Small ribosomal subunit protein uS4 (208 aa).

The S4 RNA-binding domain maps to 98-161; that stretch reads RRLDNVIYRL…RKIPVIAEAQ (64 aa).

It belongs to the universal ribosomal protein uS4 family. Part of the 30S ribosomal subunit. Contacts protein S5. The interaction surface between S4 and S5 is involved in control of translational fidelity.

Functionally, one of the primary rRNA binding proteins, it binds directly to 16S rRNA where it nucleates assembly of the body of the 30S subunit. Its function is as follows. With S5 and S12 plays an important role in translational accuracy. The protein is Small ribosomal subunit protein uS4 of Nitratidesulfovibrio vulgaris (strain DSM 19637 / Miyazaki F) (Desulfovibrio vulgaris).